Reading from the N-terminus, the 202-residue chain is 3-isopropylmalate dehydratase small subunit (202 aa).

This sequence belongs to the LeuD family. LeuD type 1 subfamily. As to quaternary structure, heterodimer of LeuC and LeuD.

The enzyme catalyses (2R,3S)-3-isopropylmalate = (2S)-2-isopropylmalate. Its pathway is amino-acid biosynthesis; L-leucine biosynthesis; L-leucine from 3-methyl-2-oxobutanoate: step 2/4. Functionally, catalyzes the isomerization between 2-isopropylmalate and 3-isopropylmalate, via the formation of 2-isopropylmaleate. This chain is 3-isopropylmalate dehydratase small subunit, found in Rhizobium etli (strain ATCC 51251 / DSM 11541 / JCM 21823 / NBRC 15573 / CFN 42).